We begin with the raw amino-acid sequence, 142 residues long: MKGKYLLGILVILGALGYMVFGGLGRNLVYFLTPSEYLQDQARYQNRPVRLGGLVKPGTVQYDKDRLELRFVLTDGVAEVPVLHKGTPPGMFKEGQGVVVEGRFQEGVFQGTNLLVKHSETYQPPKEGWTPEEVRKLIEEAQ.

Residues Met1–Lys2 lie on the Cytoplasmic side of the membrane. Residues Gly3–Gly23 traverse the membrane as a helical; Signal-anchor for type II membrane protein segment. Topologically, residues Leu24–Gln142 are periplasmic. Residues His118 and Tyr122 each coordinate heme.

It belongs to the CcmE/CycJ family.

The protein resides in the cell inner membrane. Its function is as follows. Heme chaperone required for the biogenesis of c-type cytochromes. Transiently binds heme delivered by CcmC and transfers the heme to apo-cytochromes in a process facilitated by CcmF and CcmH. The chain is Cytochrome c-type biogenesis protein CcmE from Thermus thermophilus (strain ATCC BAA-163 / DSM 7039 / HB27).